A 605-amino-acid polypeptide reads, in one-letter code: Protein phosphatase 1D (605 aa).

The segment at 1–101 (MAGLYSLGVS…CRRRSSVAFF (101 aa)) is interaction with CHEK1. The PPM-type phosphatase domain occupies 8–375 (GVSVFSDQGG…DNTSAIVICI (368 aa)). A disordered region spans residues 28-90 (VVEPEPTAEE…DAGASPAPSR (63 aa)). Ser-40 and Ser-85 each carry phosphoserine. The Mn(2+) site is built by Asp-105, Gly-106, Asp-314, and Asp-366. The interval 516-591 (STPGQMKAQE…RRLRGQKKIG (76 aa)) is disordered. Polar residues-rich tracts occupy residues 530–544 (PPTN…SNSG) and 555–577 (LSRS…NSVK). Basic residues predominate over residues 579–588 (TMRRRLRGQK).

This sequence belongs to the PP2C family. Interacts with CHEK1 and CHEK2; dephosphorylates them. Interacts with MAPK14. The cofactor is Mg(2+). Requires Mn(2+) as cofactor. As to expression, expressed in fetal and adult brain. Also detected in fetal liver and skeletal muscle, but not in their adult counterparts.

It is found in the nucleus. It localises to the cytoplasm. The protein localises to the cytosol. The enzyme catalyses O-phospho-L-seryl-[protein] + H2O = L-seryl-[protein] + phosphate. The catalysed reaction is O-phospho-L-threonyl-[protein] + H2O = L-threonyl-[protein] + phosphate. Involved in the negative regulation of p53 expression. Required for the relief of p53-dependent checkpoint mediated cell cycle arrest. Binds to and dephosphorylates 'Ser-15' of TP53 and 'Ser-345' of CHEK1 which contributes to the functional inactivation of these proteins. Mediates MAPK14 dephosphorylation and inactivation. Is also an important regulator of global heterochromatin silencing and critical in maintaining genome integrity. The protein is Protein phosphatase 1D (PPM1D) of Homo sapiens (Human).